The chain runs to 67 residues: MGMRMMFTMFLLVVLAITVVSFTSDHASDGRNTAANDKASNLMALRDECCPDPPCKASNPDLCDWRS.

Positions 1 to 21 are cleaved as a signal peptide; that stretch reads MGMRMMFTMFLLVVLAITVVS. A propeptide spanning residues 22-46 is cleaved from the precursor; the sequence is FTSDHASDGRNTAANDKASNLMALR. 2 cysteine pairs are disulfide-bonded: Cys49-Cys55 and Cys50-Cys63. Residues 51-53 form a lacks the Ser-Xaa-Pro motif that is crucial for potent interaction with nAChR region; that stretch reads PDP.

Belongs to the conotoxin A superfamily. As to expression, expressed by the venom duct.

The protein resides in the secreted. In terms of biological role, alpha-conotoxins act on postsynaptic membranes, they bind to the nicotinic acetylcholine receptors (nAChR) and thus inhibit them. Has possibly a distinct nAChR binding mode from other alpha-conotoxins, due to a different three residue motif (lacks the Ser-Xaa-Pro motif). This chain is Alpha-conotoxin-like Qc1.1a, found in Conus quercinus (Oak cone).